A 712-amino-acid polypeptide reads, in one-letter code: Polyribonucleotide nucleotidyltransferase (712 aa).

Residues Asp485 and Asp491 each contribute to the Mg(2+) site. Residues 552–611 form the KH domain; sequence PRIHTMKIDPKKIKDVIGKGGAVIRSLTEETGTSIDIDDDGTVKIAATDNNAAKMVMSRI. Positions 621 to 689 constitute an S1 motif domain; that stretch reads NAIYTGKVSR…RQNRIRLTMK (69 aa).

It belongs to the polyribonucleotide nucleotidyltransferase family. In terms of assembly, component of the RNA degradosome, which is a multiprotein complex involved in RNA processing and mRNA degradation. Mg(2+) is required as a cofactor.

Its subcellular location is the cytoplasm. The enzyme catalyses RNA(n+1) + phosphate = RNA(n) + a ribonucleoside 5'-diphosphate. Its function is as follows. Involved in mRNA degradation. Catalyzes the phosphorolysis of single-stranded polyribonucleotides processively in the 3'- to 5'-direction. The protein is Polyribonucleotide nucleotidyltransferase of Haemophilus ducreyi (strain 35000HP / ATCC 700724).